We begin with the raw amino-acid sequence, 525 residues long: Bifunctional purine biosynthesis protein PurH (525 aa).

Residues Met-1–Thr-149 form the MGS-like domain.

The protein belongs to the PurH family.

The enzyme catalyses (6R)-10-formyltetrahydrofolate + 5-amino-1-(5-phospho-beta-D-ribosyl)imidazole-4-carboxamide = 5-formamido-1-(5-phospho-D-ribosyl)imidazole-4-carboxamide + (6S)-5,6,7,8-tetrahydrofolate. It catalyses the reaction IMP + H2O = 5-formamido-1-(5-phospho-D-ribosyl)imidazole-4-carboxamide. It participates in purine metabolism; IMP biosynthesis via de novo pathway; 5-formamido-1-(5-phospho-D-ribosyl)imidazole-4-carboxamide from 5-amino-1-(5-phospho-D-ribosyl)imidazole-4-carboxamide (10-formyl THF route): step 1/1. Its pathway is purine metabolism; IMP biosynthesis via de novo pathway; IMP from 5-formamido-1-(5-phospho-D-ribosyl)imidazole-4-carboxamide: step 1/1. This is Bifunctional purine biosynthesis protein PurH from Pelodictyon phaeoclathratiforme (strain DSM 5477 / BU-1).